The sequence spans 297 residues: MEGACASTYRSVSIKTKNKLNAAALVSGKGHQDENFPVASFLINPEYRPIIMAFYQFARQADDVADNVIASKKDRLAILEDMRSSLTGESQSEPNAVVLRQTLITHGLDHTIVHGLDLLEAFRRDVSVNRYENWDALMDYCRYSASPVGRFVLDVHKESRNLWPMNDALCTALQVINHLQDCGKDYRMMNRIYIPSDIMEAVGATAGDLGRFHASLPLRQAIETAALKTKSLLKRSSGFSAAIHDKRLGVEVAVIQRLAESLTECLTKHDPLSERVHHNKAETLGLAFVAAAGRLFS.

This sequence belongs to the phytoene/squalene synthase family. HpnC subfamily.

It catalyses the reaction presqualene diphosphate + H2O = hydroxysqualene + diphosphate. It functions in the pathway secondary metabolite biosynthesis; hopanoid biosynthesis. Functionally, involved in the biosynthesis of the hopanoid precursor squalene (SQ) from farnesyl diphosphate (FPP). Catalyzes the second step, the conversion of presqualene diphosphate (PSPP) to hydroxysqualene (HSQ). The sequence is that of Hydroxysqualene synthase from Zymomonas mobilis subsp. mobilis (strain ATCC 31821 / ZM4 / CP4).